The primary structure comprises 92 residues: UPF0223 protein SZO_10560 (92 aa).

This sequence belongs to the UPF0223 family.

This Streptococcus equi subsp. zooepidemicus (strain H70) protein is UPF0223 protein SZO_10560.